Consider the following 493-residue polypeptide: High affinity nitrate transporter 2.7 (493 aa).

Positions 1-19 (MEPSQRNTKPPSFSDSTIP) are enriched in polar residues. Residues 1–20 (MEPSQRNTKPPSFSDSTIPV) form a disordered region. Helical transmembrane passes span 46–66 (WLSLFSCFFSTFSIPPLVPVI), 70–90 (LNLSASTVSAAGIASFAGSIF), 113–133 (FLTAPVILSASLVSSPTSFIL), 136–156 (FFVGFSLANFVANQYWMSSMF), 174–194 (VGAGISQLLMPLIYSTIAEFL), 202–222 (VSFVFPAIFQVTTAVLVLLYG), 257–277 (FVEILIGGLGNYRAWILALLY), 299–319 (FGVNLEAAGTIAASFGISNIA), 341–361 (LWGLWIVQSVAGLLCVLLGRV), 368–388 (ILVMWVFSVFVQAASGLVFGV), 400–420 (VAGITGSGGTVGAVVTQFLLF), and 431–451 (ISLMGLMTFVFALSVTSIYFP).

This sequence belongs to the major facilitator superfamily. Nitrate/nitrite porter (TC 2.A.1.8) family. Expressed in seeds, leaves and shoots. Lower expression in roots.

The protein localises to the vacuole membrane. Its function is as follows. Involved in high-affinity nitrate transport. Controls nitrate content in seeds. In Arabidopsis thaliana (Mouse-ear cress), this protein is High affinity nitrate transporter 2.7 (NRT2.7).